We begin with the raw amino-acid sequence, 199 residues long: Putative 3-methyladenine DNA glycosylase (199 aa).

This sequence belongs to the DNA glycosylase MPG family.

This chain is Putative 3-methyladenine DNA glycosylase, found in Rhizobium etli (strain ATCC 51251 / DSM 11541 / JCM 21823 / NBRC 15573 / CFN 42).